Here is a 335-residue protein sequence, read N- to C-terminus: Ribosomal RNA large subunit methyltransferase F (335 aa).

Belongs to the methyltransferase superfamily. METTL16/RlmF family.

It localises to the cytoplasm. It carries out the reaction adenosine(1618) in 23S rRNA + S-adenosyl-L-methionine = N(6)-methyladenosine(1618) in 23S rRNA + S-adenosyl-L-homocysteine + H(+). In terms of biological role, specifically methylates the adenine in position 1618 of 23S rRNA. In Yersinia enterocolitica serotype O:8 / biotype 1B (strain NCTC 13174 / 8081), this protein is Ribosomal RNA large subunit methyltransferase F.